The sequence spans 527 residues: Optineurin (527 aa).

Disordered stretches follow at residues 1-32 and 101-143; these read MSHQ…HPNL and SHEN…KDQL. Residues 38-170 adopt a coiled-coil conformation; sequence EELLQQMKEL…VSELQLKLNS (133 aa). The tract at residues 58–209 is interaction with Rab8; the sequence is MKLNNQAMKG…GPTRTVSTSR (152 aa). The LIR signature appears at 176–181; sequence DSFVEI. At serine 177 the chain carries Phosphoserine; by TBK1. Residues 186–197 show a composition bias toward basic and acidic residues; the sequence is GEAEGSVKEIKH. 2 disordered regions span residues 186–214 and 262–292; these read GEAE…LSKY and SDFE…EKGL. Serine 198 is modified (phosphoserine). Over residues 201 to 210 the composition is skewed to polar residues; the sequence is PTRTVSTSRA. A coiled-coil region spans residues 239–458; the sequence is CLREGNQKVE…LLKENDAFED (220 aa). 2 stretches are compositionally biased toward basic and acidic residues: residues 262-274 and 281-292; these read SDFE…RSEI and STEKENDEEKGL. Positions 361–527 are interaction with HD; sequence TRKESEKVDR…LQIHVMDCII (167 aa). The segment at 362 to 470 is interaction with MYO6; that stretch reads RKESEKVDRA…RQSLMEMQSR (109 aa). The UBAN motif lies at 424–429; it reads DFHAER. Position 476 is a phosphoserine (serine 476). The segment at 497–527 adopts a CCHC NOA-type zinc-finger fold; it reads QRNIPIHSCPKCGEVLPDIDTLQIHVMDCII. Cysteine 505, cysteine 508, histidine 521, and cysteine 525 together coordinate Zn(2+).

As to quaternary structure, self-associates. Interacts with HD. Interacts with GTF3A. Interacts with MYO6. Interacts (via UBAN) with ubiquitinated TFRC. Interacts with GTP-bound Rab8 (RAB8A and/or RAB8B). Interacts with TBC1D17. Interacts with TBK1. Interacts with TRAF3. Binds to linear ubiquitin chains. Interacts with LC3 family members MAP1LC3A, MAP1LC3B, GABARAP, GABARAPL1 and GABARAPL2; OPTN phosphorylation increases the association (at least with MAP1LC3B). Interacts with RAB12; the interaction may be indirect. Interacts with TBK1; this interaction leads to the Golgi localization of TBK1 and its subsequent activation. Interacts with palmitoyltransferase ZDHHC17/HIP14; the interaction does not lead to palmitoylation of OPTN. Interacts with CYLD. Interacts with TOM1; the interaction is indirect and is mediated by MYO6, which acts as a bridge between TOM1 and OPTN. Interacts with USP12; the interaction is independent of USP12 deubiquitinase activity and may be involved in regulation of autophagic flux. In terms of processing, phosphorylated by TBK1, leading to restrict bacterial proliferation in case of infection.

It is found in the cytoplasm. Its subcellular location is the perinuclear region. It localises to the golgi apparatus. The protein resides in the trans-Golgi network. The protein localises to the cytoplasmic vesicle. It is found in the autophagosome. Its subcellular location is the recycling endosome. Its function is as follows. Plays an important role in the maintenance of the Golgi complex, in membrane trafficking, in exocytosis, through its interaction with myosin VI and Rab8. Links myosin VI to the Golgi complex and plays an important role in Golgi ribbon formation. Negatively regulates the induction of IFNB in response to RNA virus infection. Plays a neuroprotective role in the eye and optic nerve. Probably part of the TNF-alpha signaling pathway that can shift the equilibrium toward induction of cell death. May act by regulating membrane trafficking and cellular morphogenesis via a complex that contains Rab8 and huntingtin (HD). Mediates the interaction of Rab8 with the probable GTPase-activating protein TBC1D17 during Rab8-mediated endocytic trafficking, such as that of transferrin receptor (TFRC/TfR); regulates Rab8 recruitment to tubules emanating from the endocytic recycling compartment. Autophagy receptor that interacts directly with both the cargo to become degraded and an autophagy modifier of the MAP1 LC3 family; targets ubiquitin-coated bacteria (xenophagy) and appears to function in the same pathway as SQSTM1 and CALCOCO2/NDP52. In Pongo abelii (Sumatran orangutan), this protein is Optineurin (OPTN).